The chain runs to 683 residues: DNA-directed RNA polymerase subunit beta' (683 aa).

Positions 69, 71, 87, and 90 each coordinate Zn(2+). 3 residues coordinate Mg(2+): Asp-489, Asp-491, and Asp-493.

This sequence belongs to the RNA polymerase beta' chain family. RpoC1 subfamily. As to quaternary structure, in plastids the minimal PEP RNA polymerase catalytic core is composed of four subunits: alpha, beta, beta', and beta''. When a (nuclear-encoded) sigma factor is associated with the core the holoenzyme is formed, which can initiate transcription. The cofactor is Mg(2+). Zn(2+) serves as cofactor.

Its subcellular location is the plastid. It localises to the chloroplast. It carries out the reaction RNA(n) + a ribonucleoside 5'-triphosphate = RNA(n+1) + diphosphate. In terms of biological role, DNA-dependent RNA polymerase catalyzes the transcription of DNA into RNA using the four ribonucleoside triphosphates as substrates. The protein is DNA-directed RNA polymerase subunit beta' of Sorghum bicolor (Sorghum).